The chain runs to 393 residues: N-acyl-phosphatidylethanolamine-hydrolyzing phospholipase D (393 aa).

N-acetylmethionine is present on M1. Residues 1–16 (MDENESNQSLMTSSQY) show a composition bias toward polar residues. Residues 1 to 40 (MDENESNQSLMTSSQYPKEAVRKRQNSARNSGASDSSRFS) form a disordered region. 2 residues coordinate Zn(2+): H185 and H187. Residue Y188 participates in an N-acyl-1,2-diacyl-sn-glycero-3-phosphoethanolamine binding. Zn(2+) contacts are provided by D189, H190, and H253. K256 and M260 together coordinate deoxycholate. D284 is a binding site for Zn(2+). H321 contacts an N-acyl-1,2-diacyl-sn-glycero-3-phosphoethanolamine. Residue H343 participates in Zn(2+) binding. A348 lines the deoxycholate pocket.

This sequence belongs to the NAPE-PLD family. As to quaternary structure, homodimer. Bile acids promote the assembly of inactive monomers into an active dimer and enable catalysis. Zn(2+) is required as a cofactor. In terms of tissue distribution, widely expressed. Highest expression in brain, kidney and testis (at protein level). Expressed in adipose tissue (at protein level).

The protein localises to the golgi apparatus membrane. It is found in the early endosome membrane. Its subcellular location is the nucleus envelope. It localises to the nucleus. The protein resides in the nucleoplasm. The enzyme catalyses an N-acyl-1,2-diacyl-sn-glycero-3-phosphoethanolamine + H2O = an N-acylethanolamine + a 1,2-diacyl-sn-glycero-3-phosphate + H(+). It catalyses the reaction N-butanoyl-1-hexadecanoyl-2-(9Z,12Z-octadecadienoyl)-sn-glycero-3-phosphoethanolamine + H2O = N-butanoyl ethanolamine + 1-hexadecanoyl-2-(9Z,12Z-octadecadienoyl)-sn-glycero-3-phosphate + H(+). It carries out the reaction N-hexanoyl-1-hexadecanoyl-2-(9Z,12Z-octadecadienoyl)-sn-glycero-3-phosphoethanolamine + H2O = N-hexanoyl ethanolamine + 1-hexadecanoyl-2-(9Z,12Z-octadecadienoyl)-sn-glycero-3-phosphate + H(+). The catalysed reaction is N-octanoyl-1-hexadecanoyl-2-(9Z,12Z-octadecadienoyl)-sn-glycero-3-phosphoethanolamine + H2O = N-octanoyl ethanolamine + 1-hexadecanoyl-2-(9Z,12Z-octadecadienoyl)-sn-glycero-3-phosphate + H(+). The enzyme catalyses N-decanoyl-1-hexadecanoyl-2-(9Z,12Z-octadecadienoyl)-sn-glycero-3-phosphoethanolamine + H2O = N-decanoyl ethanolamine + 1-hexadecanoyl-2-(9Z,12Z-octadecadienoyl)-sn-glycero-3-phosphate + H(+). It catalyses the reaction N-dodecanoyl-1,2-di-(9Z-octadecenoyl)-sn-glycero-3-phosphoethanolamine + H2O = N-dodecanoylethanolamine + 1,2-di-(9Z-octadecenoyl)-sn-glycero-3-phosphate + H(+). It carries out the reaction N-tetradecanoyl-1,2-di-(9Z-octadecenoyl)-sn-glycero-3-phosphoethanolamine + H2O = N-tetradecanoylethanolamine + 1,2-di-(9Z-octadecenoyl)-sn-glycero-3-phosphate + H(+). The catalysed reaction is N-hexadecanoyl-1,2-di-(9Z-octadecenoyl)-sn-glycero-3-phosphoethanolamine + H2O = N-hexadecanoylethanolamine + 1,2-di-(9Z-octadecenoyl)-sn-glycero-3-phosphate + H(+). The enzyme catalyses N,1-dihexadecanoyl-2-(9Z,12Z-octadecadienoyl)-sn-glycero-3-phosphoethanolamine + H2O = 1-hexadecanoyl-2-(9Z,12Z-octadecadienoyl)-sn-glycero-3-phosphate + N-hexadecanoylethanolamine + H(+). It catalyses the reaction N-octadecanoyl-1,2-di-(9Z-octadecenoyl)-sn-glycero-3-phosphoethanolamine + H2O = N-octadecanoyl ethanolamine + 1,2-di-(9Z-octadecenoyl)-sn-glycero-3-phosphate + H(+). It carries out the reaction N,1,2-tri-(9Z-octadecenoyl)-sn-glycero-3-phosphoethanolamine + H2O = N-(9Z-octadecenoyl) ethanolamine + 1,2-di-(9Z-octadecenoyl)-sn-glycero-3-phosphate + H(+). The catalysed reaction is N-(5Z,8Z,11Z,14Z-eicosatetraenoyl)-1,2-diacyl-sn-glycero-3-phosphoethanolamine + H2O = N-(5Z,8Z,11Z,14Z-eicosatetraenoyl)-ethanolamine + a 1,2-diacyl-sn-glycero-3-phosphate + H(+). The enzyme catalyses N-(5Z,8Z,11Z,14Z-eicosatetraenoyl)-1,2-di-(9Z-octadecenoyl)-sn-glycero-3-phosphoethanolamine + H2O = N-(5Z,8Z,11Z,14Z-eicosatetraenoyl)-ethanolamine + 1,2-di-(9Z-octadecenoyl)-sn-glycero-3-phosphate + H(+). It catalyses the reaction 1-O-(1Z-octadecenoyl)-2-(9Z-octadecenoyl)-sn-glycero-3-phospho-N-hexadecanoyl-ethanolamine + H2O = 1-O-(1Z-octadecenoyl)-2-(9Z-octadecenoyl)-sn-glycero-3-phosphate + N-hexadecanoylethanolamine + H(+). It carries out the reaction N,1-diacyl-sn-glycero-3-phosphoethanolamine + H2O = an N-acylethanolamine + a 1-acyl-sn-glycero-3-phosphate + H(+). The catalysed reaction is N,1-dihexadecanoyl-sn-glycero-3-phosphoethanolamine + H2O = N-hexadecanoylethanolamine + 1-hexadecanoyl-sn-glycero-3-phosphate + H(+). The enzyme catalyses N-(5Z,8Z,11Z,14Z-eicosatetraenoyl)-1-(9Z-octadecenoyl)-sn-glycero-3-phosphoethanolamine + H2O = N-(5Z,8Z,11Z,14Z-eicosatetraenoyl)-ethanolamine + 1-(9Z-octadecenoyl)-sn-glycero-3-phosphate + H(+). Activated by divalent cations. Activated by bile acids and their conjugates, except for lithocholic acid which is rather inhibitory. Binding of deoxycholic acid favors the selective release of anandamide and likely other unsatured long FAEs. Inhibited by phosphatidylethanolamines. In terms of biological role, D-type phospholipase that hydrolyzes N-acyl-phosphatidylethanolamines (NAPEs) to produce bioactive N-acylethanolamines/fatty acid ethanolamides (NAEs/FAEs) and phosphatidic acid. Cleaves the terminal phosphodiester bond of diacyl- and alkenylacyl-NAPEs, primarily playing a role in the generation of long-chain saturated and monounsaturated NAEs in the brain. May control NAPE homeostasis in dopaminergic neuron membranes and regulate neuron survival, partly through RAC1 activation. As a regulator of lipid metabolism in the adipose tissue, mediates the crosstalk between adipocytes, gut microbiota and immune cells to control body temperature and weight. In particular, regulates energy homeostasis by promoting cold-induced brown or beige adipocyte differentiation program to generate heat from fatty acids and glucose. Has limited D-type phospholipase activity toward N-acyl lyso-NAPEs. The polypeptide is N-acyl-phosphatidylethanolamine-hydrolyzing phospholipase D (NAPEPLD) (Homo sapiens (Human)).